A 58-amino-acid chain; its full sequence is Small ribosomal subunit protein bS21 (58 aa).

Residues Phe-37–Phe-58 form a disordered region. The segment covering Val-43–Phe-58 has biased composition (basic residues).

This sequence belongs to the bacterial ribosomal protein bS21 family.

The sequence is that of Small ribosomal subunit protein bS21 from Enterococcus faecalis (strain ATCC 700802 / V583).